The following is a 102-amino-acid chain: CRISPR-associated endoribonuclease Cas2 (102 aa).

Residue Asp8 participates in Mg(2+) binding.

The protein belongs to the CRISPR-associated endoribonuclease Cas2 protein family. As to quaternary structure, homodimer, forms a heterotetramer with a Cas1 homodimer. The cofactor is Mg(2+).

Its function is as follows. CRISPR (clustered regularly interspaced short palindromic repeat), is an adaptive immune system that provides protection against mobile genetic elements (viruses, transposable elements and conjugative plasmids). CRISPR clusters contain sequences complementary to antecedent mobile elements and target invading nucleic acids. CRISPR clusters are transcribed and processed into CRISPR RNA (crRNA). Functions as a ssRNA-specific endoribonuclease. Involved in the integration of spacer DNA into the CRISPR cassette. This Acidovorax ebreus (strain TPSY) (Diaphorobacter sp. (strain TPSY)) protein is CRISPR-associated endoribonuclease Cas2.